A 285-amino-acid chain; its full sequence is Pantothenate synthetase (285 aa).

Residue 30–37 participates in ATP binding; it reads MGFLHEGH. The active-site Proton donor is His37. Gln61 contacts (R)-pantoate. Gln61 provides a ligand contact to beta-alanine. Residue 147-150 coordinates ATP; sequence GQKD. A (R)-pantoate-binding site is contributed by Gln153. Residues Val176 and 184 to 187 contribute to the ATP site; that span reads KSSR.

It belongs to the pantothenate synthetase family. Homodimer.

It localises to the cytoplasm. The catalysed reaction is (R)-pantoate + beta-alanine + ATP = (R)-pantothenate + AMP + diphosphate + H(+). It participates in cofactor biosynthesis; (R)-pantothenate biosynthesis; (R)-pantothenate from (R)-pantoate and beta-alanine: step 1/1. Functionally, catalyzes the condensation of pantoate with beta-alanine in an ATP-dependent reaction via a pantoyl-adenylate intermediate. The polypeptide is Pantothenate synthetase (Listeria monocytogenes serotype 4b (strain F2365)).